Consider the following 661-residue polypeptide: ATP-dependent RNA helicase vasa (661 aa).

The segment covering 1 to 10 (MSDDWDDEPI) has biased composition (acidic residues). Residues 1–186 (MSDDWDDEPI…RRRRNEDDIN (186 aa)) form a disordered region. S22 carries the post-translational modification Phosphoserine. T27 carries the phosphothreonine modification. Gly residues-rich tracts occupy residues 38–52 (DGVGGSGGEGGGYQG) and 60–83 (RIGGGRGGGAGGYRGGNRDGGGFH). Residues 85-95 (GRREGERDFRG) show a composition bias toward basic and acidic residues. 5 tandem repeats follow at residues 93–99 (FRGGEGG), 100–106 (FRGGQGG), 107–113 (SRGGQGG), 114–120 (SRGGQGG), and 121–127 (FRGGEGG). A 5 X 7 AA tandem repeats of [FS]-R-G-G-[EQ]-G-G region spans residues 93–127 (FRGGEGGFRGGQGGSRGGQGGSRGGQGGFRGGEGG). A compositionally biased stretch (gly residues) spans 96–129 (GEGGFRGGQGGSRGGQGGSRGGQGGFRGGEGGFR). Residues 131-172 (RLYENEDGDERRGRLDREERGGERRGRLDREERGGERGERGD) are compositionally biased toward basic and acidic residues. The B30.2/SPRY domain-binding motif motif lies at 184-188 (DINNN). The tract at residues 184 to 203 (DINNNNNIVEDVERKREFYI) is required for posterior localization in oocyte. A Q motif motif is present at residues 245–273 (QHFTSADLRDIIIDNVNKSGYKIPTPIQK). In terms of domain architecture, Helicase ATP-binding spans 276–453 (IPVISSGRDL…GEFLKNYVFV (178 aa)). 289–296 (AQTGSGKT) lines the ATP pocket. The DEAD box signature appears at 399-402 (DEAD). One can recognise a Helicase C-terminal domain in the interval 477 to 624 (KRSKLIEILS…TVPDFLRTCG (148 aa)).

This sequence belongs to the DEAD box helicase family. DDX4/VASA subfamily. In terms of assembly, interacts with eIF5B and faf. Interacts with gus (via B30.2/SPRY domain) and Fsn (via B30.2/SPRY domain). Interacts with aub, me31B, eIF-4a and TER94. Interacts with piwi; this interaction is RNA independent. Interacts with Dcr-1 and Fmr1; these interactions occur in the polar granules. Mg(2+) is required as a cofactor. Ubiquitinated during oogenesis. Deubiquitinated by faf, which protects this protein from proteasome-mediated degradation. In terms of tissue distribution, abundantly expressed in the female germline. Gus and faf are required for vas expression in the posterior pole of the oocyte.

It localises to the cytoplasm. Its subcellular location is the perinuclear region. It is found in the cytoplasmic ribonucleoprotein granule. The catalysed reaction is ATP + H2O = ADP + phosphate + H(+). Its function is as follows. Involved in translational control mechanisms operating in early stages of oogenesis. Required maternally in many stages of oogenesis, including cystocyte differentiation, oocyte differentiation, and specification of anterior-posterior polarity in the developing cysts. Essential for the formation and/or structural integrity of perinuclear nuage particles during germ cell formation. Required for gus, Fsn and aub accumulation at the posterior pole of the embryo. Required for the localization of vas to the perinuclear region of nurse cells. May have a role in production of piwi-interacting RNA (piRNA). This chain is ATP-dependent RNA helicase vasa, found in Drosophila melanogaster (Fruit fly).